The chain runs to 55 residues: Large ribosomal subunit protein bL33 (55 aa).

The protein belongs to the bacterial ribosomal protein bL33 family.

The polypeptide is Large ribosomal subunit protein bL33 (Sodalis glossinidius (strain morsitans)).